A 310-amino-acid polypeptide reads, in one-letter code: Tagatose-6-phosphate kinase (310 aa).

This sequence belongs to the carbohydrate kinase PfkB family. LacC subfamily.

It carries out the reaction D-tagatofuranose 6-phosphate + ATP = D-tagatofuranose 1,6-bisphosphate + ADP + H(+). Its pathway is carbohydrate metabolism; D-tagatose 6-phosphate degradation; D-glyceraldehyde 3-phosphate and glycerone phosphate from D-tagatose 6-phosphate: step 1/2. The chain is Tagatose-6-phosphate kinase from Streptococcus agalactiae serotype V (strain ATCC BAA-611 / 2603 V/R).